A 434-amino-acid chain; its full sequence is A-adding tRNA nucleotidyltransferase (434 aa).

20–23 (GAVR) lines the ATP pocket. Mg(2+) contacts are provided by Asp-33 and Asp-35. ATP-binding positions include 91-92 (RD), Asn-96, 132-141 (DPLRAWRAAR), and Arg-177. An HD domain is found at 227–339 (VFEHGVEALH…ELLPDLLSLM (113 aa)).

It belongs to the tRNA nucleotidyltransferase/poly(A) polymerase family. Mg(2+) is required as a cofactor.

The catalysed reaction is a tRNA with a 3' CC end + ATP = a tRNA with a 3' CCA end + diphosphate. In terms of biological role, tRNA nucleotidyltransferase involved in the synthesis of the tRNA CCA terminus. Adds the terminal adenosine residue to tRNA. This chain is A-adding tRNA nucleotidyltransferase, found in Deinococcus radiodurans (strain ATCC 13939 / DSM 20539 / JCM 16871 / CCUG 27074 / LMG 4051 / NBRC 15346 / NCIMB 9279 / VKM B-1422 / R1).